The following is a 120-amino-acid chain: Flagellar protein FliT (120 aa).

The tract at residues 1–50 (MNDFISSLNNWQALYALSNTMLSLANSGQWDELIEQEVKYVTLVEAIARN) is required for homodimerization. Positions 59 to 97 (FQEKARELLTKVLANEAALKIKLQARMEELRVLIEQNGN) are fliD binding.

It belongs to the FliT family. As to quaternary structure, homodimer. Interacts with FliD and FlhC.

It localises to the cytoplasm. Its subcellular location is the cytosol. Its function is as follows. Dual-function protein that regulates the transcription of class 2 flagellar operons and that also acts as an export chaperone for the filament-capping protein FliD. As a transcriptional regulator, acts as an anti-FlhDC factor; it directly binds FlhC, thus inhibiting the binding of the FlhC/FlhD complex to class 2 promoters, resulting in decreased expression of class 2 flagellar operons. As a chaperone, effects FliD transition to the membrane by preventing its premature polymerization, and by directing it to the export apparatus. The sequence is that of Flagellar protein FliT from Cronobacter sakazakii (strain ATCC BAA-894) (Enterobacter sakazakii).